Consider the following 334-residue polypeptide: Delta(1)-pyrroline-2-carboxylate/Delta(1)-piperideine-2-carboxylate reductase (334 aa).

Serine 44 serves as the catalytic Charge relay system. Residue histidine 45 is the Proton donor of the active site. Arginine 49 contributes to the substrate binding site. Histidine 117 to leucine 121 serves as a coordination point for NADP(+). Residue threonine 157 coordinates substrate. Position 175-177 (aspartate 175–alanine 177) interacts with NADP(+). Arginine 183 to glycine 184 serves as a coordination point for substrate. The Charge relay system role is filled by glutamate 185. NADP(+) contacts are provided by residues histidine 226–lysine 227 and arginine 301–arginine 307.

It belongs to the LDH2/MDH2 oxidoreductase family. Homodimer.

The enzyme catalyses L-pipecolate + NADP(+) = Delta(1)-piperideine-2-carboxylate + NADPH + H(+). The catalysed reaction is L-proline + NADP(+) = 1-pyrroline-2-carboxylate + NADPH + H(+). It carries out the reaction cis-4-hydroxy-L-proline + NADP(+) = Delta(1)-pyrroline-(4S)-hydroxy-2-carboxylate + NADPH + 2 H(+). In terms of biological role, catalyzes the reduction of both Delta(1)-pyrroline-2-carboxylate (Pyr2C) and Delta(1)-piperideine-2-carboxylate (Pip2C) to L-proline and L-pipecolate, respectively, using NADPH as the electron donor. Cannot use NADH instead of NADPH. Is likely involved in a degradation pathway that converts trans-3-hydroxy-L-proline (t3LHyp) to L-proline, which would allow P.aeruginosa to grow on t3LHyp as a sole carbon source. Can also catalyze the reverse oxidation reactions, albeit at a much lower rate. Is also able to use Delta(1)-pyrroline-(4S)-hydroxy-2-carboxylate (Pyr4SH2C) and cis-4-hydroxy-L-proline (c4LHyp) as substrates, and might be involved in the metabolism of c4LHyp, a compound which is generated by the hydroxylation of free L-proline in bacteria. This is Delta(1)-pyrroline-2-carboxylate/Delta(1)-piperideine-2-carboxylate reductase from Pseudomonas aeruginosa (strain ATCC 15692 / DSM 22644 / CIP 104116 / JCM 14847 / LMG 12228 / 1C / PRS 101 / PAO1).